The following is a 328-amino-acid chain: Transcription factor bHLH84 (328 aa).

The disordered stretch occupies residues 145 to 248 (QCESSKKRTR…ASRGAATDPQ (104 aa)). Basic and acidic residues predominate over residues 220 to 229 (LSKEDGEDSK). The region spanning 243–292 (AATDPQSLYARKRRERINERLRILQHLVPNGTKVDISTMLEEAVQYVKFL) is the bHLH domain.

Belongs to the bHLH protein family. As to quaternary structure, homodimer.

Its subcellular location is the nucleus. The sequence is that of Transcription factor bHLH84 (BHLH84) from Arabidopsis thaliana (Mouse-ear cress).